A 95-amino-acid polypeptide reads, in one-letter code: Integration host factor subunit beta (95 aa).

Residues 56–76 (RAPRTGRNPKTGSSVDLEGKY) form a disordered region.

It belongs to the bacterial histone-like protein family. In terms of assembly, heterodimer of an alpha and a beta chain.

In terms of biological role, this protein is one of the two subunits of integration host factor, a specific DNA-binding protein that functions in genetic recombination as well as in transcriptional and translational control. The protein is Integration host factor subunit beta of Shewanella baltica (strain OS223).